The sequence spans 61 residues: DNA-binding protein 7a (61 aa).

The segment at 37-61 is disordered; it reads NGKTGRGAVSEKDAPKELLEKLEKK. Positions 45–61 are enriched in basic and acidic residues; it reads VSEKDAPKELLEKLEKK.

It belongs to the 7 kDa DNA-binding/endoribonuclease P2 family. As to quaternary structure, monomer.

The protein localises to the cytoplasm. Can constrain negative DNA supercoils. May be involved in maintaining the integrity of the genome at high temperature. This chain is DNA-binding protein 7a, found in Acidianus hospitalis (strain W1).